A 318-amino-acid chain; its full sequence is Strigolactone esterase D14 (318 aa).

The span at 1-11 (MLRSTHPPPSS) shows a compositional bias: pro residues. Residues 1-48 (MLRSTHPPPSSPSSSSSGGGGGGGSSASSSSEKTMVGGGGGGGGGSGS) form a disordered region. Gly residues predominate over residues 36 to 47 (VGGGGGGGGGSG). Serine 147 functions as the Nucleophile in the catalytic mechanism. Substrate contacts are provided by serine 147 and cysteine 241. Active-site residues include aspartate 268 and histidine 297. Histidine 297 contacts substrate.

The protein belongs to the AB hydrolase superfamily. Interacts with D53. The interaction between D53 and D14 is enhanced in the presence of strigolactones. The interaction with D53 occurs in the presence of (2'R) stereoisomers of strigolactones, but not (2'S) stereoisomers. Interacts with SLR1 in a strigolactone-dependent manner. Interacts with D3 in a strigolactone-dependent manner. In terms of tissue distribution, expressed in the parenchyma cells of the root stele and lateral roots, vascular tissues of vein and leaf sheath, ligule base, auricle base and stem base.

The protein resides in the cytoplasm. Its subcellular location is the nucleus. Involved in strigolactone (SL) signaling pathway. May function downstream of SL synthesis, as a component of hormone signaling or as an enzyme that participates in the conversion of SL to the bioactive form. Strigolactones are hormones that inhibit tillering and shoot branching through the MAX-dependent pathway, contribute to the regulation of shoot architectural response to phosphate-limiting conditions and function as rhizosphere signal that stimulates hyphal branching of arbuscular mycorrhizal fungi and trigger seed germination of root parasitic weeds. Strigolactone-dependent association of D14 with D3 and D53 (a repressor of SL signaling) triggers D53 ubiquitination and degradation. Hydrolyzes the butenolide ring of SLs. A reaction product D-OH is trapped in the cavity of D14, inducing the interaction with SLR1, and probably with other proteins such as D3 and D53. Contributes to the negative regulation of gibberellin signaling. The chain is Strigolactone esterase D14 from Oryza sativa subsp. japonica (Rice).